The chain runs to 249 residues: Superoxide dismutase 1 copper chaperone (249 aa).

The 64-residue stretch at Thr-6 to Ile-69 folds into the HMA domain. Zn(2+) is bound at residue His-16. The Cu cation site is built by Cys-17 and Cys-20. Cys-27 and Cys-64 form a disulfide bridge. Residues Cys-229 and Cys-231 each contribute to the Cu cation site.

It belongs to the CCS1 family. In terms of assembly, homodimer, and heterodimer with apo-SOD1. Zinc-binding at His-16 of CCS1 and 'Glu-43' of apo-SOD1 is required for this heterodimerization. The cofactor is Cu(2+).

Its subcellular location is the cytoplasm. The protein resides in the mitochondrion intermembrane space. Its function is as follows. Copper chaperone for apo superoxide dismutase 1 (SOD1). Binds copper ions and delivers them specifically to apo-SOD1. In Saccharomyces cerevisiae (strain ATCC 204508 / S288c) (Baker's yeast), this protein is Superoxide dismutase 1 copper chaperone (CCS1).